The sequence spans 68 residues: Copper transport protein ATOX1 (68 aa).

The region spanning 1 to 63 (MPKHEFSVDM…TLKKTGKTVS (63 aa)) is the HMA domain. Cu cation-binding residues include C12 and C15. S47 is modified (phosphoserine). K60 is modified (N6-acetyllysine).

The protein belongs to the ATX1 family. Homodimer. Interacts with ATP7B. Interacts with ATP7A. Interacts (via dimer form) with SLC31A1 (via C-terminal domain); this interaction improves ATOX1 stability and controls intracellular Cu(I) levels. In terms of tissue distribution, ubiquitous.

In terms of biological role, binds and deliver cytosolic copper to the copper ATPase proteins. May be important in cellular antioxidant defense. In Homo sapiens (Human), this protein is Copper transport protein ATOX1.